A 286-amino-acid chain; its full sequence is MSLILPLEKPALNLRPLLWLLLPLLVLATLFFWPLSLIVEQALRGANGEIGLETFRQVVDSKRFVGALLNTLQIAFFATAGCLLLGSVMSLILVFIPFPGSELIGRVVDTFIALPTFLITLAFTFIYGSAGLLNGTLMSLFAFELPPVDFLYSMQGVILAEITVFTPLVMRPLMAALRQIDKSQLEAASILGAHPLRVIGQVIFPAALPALMAGGSLCLLLTTNEFGIVLFIGAKGVNTLPMMVYSKAILESDYTVACMIALINIVLSLGLFSLYRLAASRTGVRS.

6 helical membrane passes run 19-39 (WLLL…SLIV), 76-96 (FFAT…LVFI), 111-131 (FIAL…GSAG), 150-170 (FLYS…PLVM), 202-222 (VIFP…LLLT), and 254-274 (YTVA…LFSL). The region spanning 68 to 275 (LLNTLQIAFF…VLSLGLFSLY (208 aa)) is the ABC transmembrane type-1 domain.

Belongs to the binding-protein-dependent transport system permease family.

The protein resides in the cell inner membrane. Probably part of the PhnSTUV complex (TC 3.A.1.11.5) involved in 2-aminoethylphosphonate import. Probably responsible for the translocation of the substrate across the membrane. In Salmonella typhimurium (strain LT2 / SGSC1412 / ATCC 700720), this protein is Putative 2-aminoethylphosphonate transport system permease protein PhnU (phnU).